The chain runs to 366 residues: MQVKDQLSSLQPYKPGKSPEQMKEVYGDHSFVKLASNENPFGCSPRVLDELQKSWLDHALYPDGGATTLRQTIANKLHVKMEQVLCGSGLDEVIQMISRAVLKAGDNIVTAEATFPQYRHHAIIEGCEVKEVALNNGVYDLDEISSVVDNNTKIVWICNPNNPTGTYVNDRKLTQFIEGISENTLIVIDEAYYEYVTAKDFPETLPLLEKHKNILVLRTFSKAYGLASFRIGYAIGQEELIEKLNVVRLPFNVSSLAQKAATIAFGDDEFIEEIVRVNTEGLRQYESFCKENEIPFYQSQTNFIFLPVENGGEIYEACAHAGFIIRPFPNGVRITVGTREQNEGVISVLQQHFENKKRKSRDEANA.

A compositionally biased stretch (polar residues) spans 1 to 11; sequence MQVKDQLSSLQ. Residues 1-21 are disordered; sequence MQVKDQLSSLQPYKPGKSPEQ. The residue at position 222 (lysine 222) is an N6-(pyridoxal phosphate)lysine.

This sequence belongs to the class-II pyridoxal-phosphate-dependent aminotransferase family. Histidinol-phosphate aminotransferase subfamily. As to quaternary structure, homodimer. Pyridoxal 5'-phosphate is required as a cofactor.

It carries out the reaction L-histidinol phosphate + 2-oxoglutarate = 3-(imidazol-4-yl)-2-oxopropyl phosphate + L-glutamate. It functions in the pathway amino-acid biosynthesis; L-histidine biosynthesis; L-histidine from 5-phospho-alpha-D-ribose 1-diphosphate: step 7/9. The polypeptide is Histidinol-phosphate aminotransferase 2 (Bacillus thuringiensis subsp. konkukian (strain 97-27)).